The sequence spans 594 residues: Class I diterpene synthase TPS6, chloroplastic (594 aa).

Mg(2+) contacts are provided by Asp-330, Asp-334, Asn-474, Gln-477, and Glu-482. The DDXXD motif signature appears at 330–334; that stretch reads DDFFD.

It belongs to the terpene synthase family. Mg(2+) is required as a cofactor. Mostly expressed in trichomes of leaves and fruits.

The protein resides in the plastid. The protein localises to the chloroplast. It carries out the reaction peregrinol diphosphate = labd-13(16),14-diene-9-ol + diphosphate. It catalyses the reaction 9alpha-copalyl diphosphate = syn-isopimara-7,15-diene + diphosphate. It participates in secondary metabolite biosynthesis; terpenoid biosynthesis. In terms of biological role, involved in the biosynthesis of labdane-type diterpenoid including cleroda-dienols, and peregrinol lactones and furan derivatives, dopaminergic diterpenoids that can bind to dopamine receptors in the human pituitary gland, have probably ability to lower prolactin levels, and are used to treat menstrual cycle disorders (e.g. premenstrual syndrome and mastodynia). Terpene synthase the catalyzes the conversion of peregrinol diphosphate to labda-13(16),14-dien-9-ol, and of syn-copalyl diphosophate to dehydroabietadiene and syn-isopimara-7,15-diene. In Vitex agnus-castus (Chaste tree), this protein is Class I diterpene synthase TPS6, chloroplastic.